The following is a 239-amino-acid chain: Pyridoxine 5'-phosphate synthase (239 aa).

Position 7 (asparagine 7) interacts with 3-amino-2-oxopropyl phosphate. 9-10 serves as a coordination point for 1-deoxy-D-xylulose 5-phosphate; it reads DH. Arginine 18 is a 3-amino-2-oxopropyl phosphate binding site. Histidine 43 acts as the Proton acceptor in catalysis. 1-deoxy-D-xylulose 5-phosphate-binding residues include arginine 45 and histidine 50. Glutamate 70 acts as the Proton acceptor in catalysis. Residue threonine 100 participates in 1-deoxy-D-xylulose 5-phosphate binding. Residue histidine 191 is the Proton donor of the active site. Residues glycine 192 and 213–214 contribute to the 3-amino-2-oxopropyl phosphate site; that span reads GH.

The protein belongs to the PNP synthase family. As to quaternary structure, homooctamer; tetramer of dimers.

Its subcellular location is the cytoplasm. The catalysed reaction is 3-amino-2-oxopropyl phosphate + 1-deoxy-D-xylulose 5-phosphate = pyridoxine 5'-phosphate + phosphate + 2 H2O + H(+). It participates in cofactor biosynthesis; pyridoxine 5'-phosphate biosynthesis; pyridoxine 5'-phosphate from D-erythrose 4-phosphate: step 5/5. Its function is as follows. Catalyzes the complicated ring closure reaction between the two acyclic compounds 1-deoxy-D-xylulose-5-phosphate (DXP) and 3-amino-2-oxopropyl phosphate (1-amino-acetone-3-phosphate or AAP) to form pyridoxine 5'-phosphate (PNP) and inorganic phosphate. The protein is Pyridoxine 5'-phosphate synthase of Citrifermentans bemidjiense (strain ATCC BAA-1014 / DSM 16622 / JCM 12645 / Bem) (Geobacter bemidjiensis).